Reading from the N-terminus, the 198-residue chain is Na(+)-translocating NADH-quinone reductase subunit E (198 aa).

The next 6 helical transmembrane spans lie at 11 to 31, 35 to 55, 77 to 97, 110 to 130, 140 to 160, and 176 to 196; these read SVFI…FLAV, VSTA…SVPV, FLNF…LEMF, GIFL…SFMV, VVYG…LAGL, and LGIT…FSGI.

Belongs to the NqrDE/RnfAE family. Composed of six subunits; NqrA, NqrB, NqrC, NqrD, NqrE and NqrF.

It is found in the cell inner membrane. It catalyses the reaction a ubiquinone + n Na(+)(in) + NADH + H(+) = a ubiquinol + n Na(+)(out) + NAD(+). In terms of biological role, NQR complex catalyzes the reduction of ubiquinone-1 to ubiquinol by two successive reactions, coupled with the transport of Na(+) ions from the cytoplasm to the periplasm. NqrA to NqrE are probably involved in the second step, the conversion of ubisemiquinone to ubiquinol. This Mannheimia succiniciproducens (strain KCTC 0769BP / MBEL55E) protein is Na(+)-translocating NADH-quinone reductase subunit E.